We begin with the raw amino-acid sequence, 319 residues long: Protease HtpX homolog (319 aa).

2 helical membrane-spanning segments follow: residues threonine 6–glycine 26 and glycine 28–serine 48. Residue histidine 130 coordinates Zn(2+). Glutamate 131 is an active-site residue. Histidine 134 lines the Zn(2+) pocket. 2 consecutive transmembrane segments (helical) span residues leucine 145 to glycine 165 and proline 172 to valine 192. Residue glutamate 201 coordinates Zn(2+). Positions arginine 279–serine 319 are disordered.

This sequence belongs to the peptidase M48B family. The cofactor is Zn(2+).

The protein resides in the cell inner membrane. This Sinorhizobium fredii (strain NBRC 101917 / NGR234) protein is Protease HtpX homolog.